The chain runs to 570 residues: Eukaryotic translation initiation factor 2A (570 aa).

2 WD repeats span residues 274–316 (EKKG…FDTI) and 318–358 (GPRN…EIIS). A disordered region spans residues 468 to 526 (PPHLRKPLGGGGSAGPPSAAAPTPGNQNQRPAQPRANGNGNAPQPFRPQQSEQERKAFQ). Over residues 482–492 (GPPSAAAPTPG) the composition is skewed to low complexity. Residues 493–518 (NQNQRPAQPRANGNGNAPQPFRPQQS) show a composition bias toward polar residues. Positions 519 to 541 (EQERKAFQLKKKVEEIKVLKQRV) form a coiled coil.

It belongs to the WD repeat EIF2A family.

Functionally, functions in the early steps of protein synthesis of a small number of specific mRNAs. Acts by directing the binding of methionyl-tRNAi to 40S ribosomal subunits. In contrast to the eIF-2 complex, it binds methionyl-tRNAi to 40S subunits in a codon-dependent manner, whereas the eIF-2 complex binds methionyl-tRNAi to 40S subunits in a GTP-dependent manner. In Caenorhabditis elegans, this protein is Eukaryotic translation initiation factor 2A.